Reading from the N-terminus, the 120-residue chain is Holo-[acyl-carrier-protein] synthase (120 aa).

Mg(2+)-binding residues include aspartate 8 and glutamate 60.

Belongs to the P-Pant transferase superfamily. AcpS family. The cofactor is Mg(2+).

The protein localises to the cytoplasm. The enzyme catalyses apo-[ACP] + CoA = holo-[ACP] + adenosine 3',5'-bisphosphate + H(+). Functionally, transfers the 4'-phosphopantetheine moiety from coenzyme A to a Ser of acyl-carrier-protein. This chain is Holo-[acyl-carrier-protein] synthase, found in Anaplasma marginale (strain Florida).